The chain runs to 489 residues: CUGBP Elav-like family member 1-B (489 aa).

RRM domains follow at residues 16–99, 108–188, and 404–482; these read IKMF…PADS, RKLF…FADT, and ANLF…LKRS.

It belongs to the CELF/BRUNOL family. As to quaternary structure, oligomer. Oligomerization is required for RNA-binding and EDEN-dependent deadenylation. In terms of processing, phosphorylated during oocyte maturation and dephosphorylated following egg activation. Dephosphorylation is calcium dependent and correlates with the increase in the activity of EDEN-dependent deadenylation.

The protein resides in the nucleus. It localises to the cytoplasm. RNA-binding protein implicated in the regulation of several post-transcriptional events. May be involved in pre-mRNA alternative splicing, mRNA translation activation and stability. Mediates the rapid and sequence-specific cytoplasmic deadenylation of EDEN-containing maternal mRNAs following fertilization. Binds to AU-rich sequences (AREs) of jun mRNA. Binds to the embryonic deadenylation element (EDEN) motif localized in the 3'-UTR of maternal mRNAs. Binds to RNA containing several repeats of the consensus sequence 5'-UGU-3'. EDEN-dependent deadenylation is enhanced by the presence of an additional cis element composed of three AUU repeats. The chain is CUGBP Elav-like family member 1-B (cugbp1-b) from Xenopus laevis (African clawed frog).